The following is a 33-amino-acid chain: Photosystem II reaction center protein Psb30 (33 aa).

A helical transmembrane segment spans residues 8 to 28 (QLTALAFIVLSGPLVIALLAF).

This sequence belongs to the Psb30/Ycf12 family. In terms of assembly, PSII is composed of 1 copy each of membrane proteins PsbA, PsbB, PsbC, PsbD, PsbE, PsbF, PsbH, PsbI, PsbJ, PsbK, PsbL, PsbM, PsbT, PsbX, PsbY, PsbZ, Psb30/Ycf12, peripheral proteins of the oxygen-evolving complex and a large number of cofactors. It forms dimeric complexes.

Its subcellular location is the plastid. The protein resides in the chloroplast thylakoid membrane. A core subunit of photosystem II (PSII), probably helps stabilize the reaction center. The sequence is that of Photosystem II reaction center protein Psb30 from Staurastrum punctulatum (Green alga).